The chain runs to 863 residues: Alanine--tRNA ligase (863 aa).

Residues His-552, His-556, Cys-654, and His-658 each contribute to the Zn(2+) site.

This sequence belongs to the class-II aminoacyl-tRNA synthetase family. It depends on Zn(2+) as a cofactor.

It is found in the cytoplasm. The catalysed reaction is tRNA(Ala) + L-alanine + ATP = L-alanyl-tRNA(Ala) + AMP + diphosphate. In terms of biological role, catalyzes the attachment of alanine to tRNA(Ala) in a two-step reaction: alanine is first activated by ATP to form Ala-AMP and then transferred to the acceptor end of tRNA(Ala). Also edits incorrectly charged Ser-tRNA(Ala) and Gly-tRNA(Ala) via its editing domain. The sequence is that of Alanine--tRNA ligase from Halorhodospira halophila (strain DSM 244 / SL1) (Ectothiorhodospira halophila (strain DSM 244 / SL1)).